Consider the following 194-residue polypeptide: Large ribosomal subunit protein bL25 (194 aa).

The protein belongs to the bacterial ribosomal protein bL25 family. CTC subfamily. In terms of assembly, part of the 50S ribosomal subunit; part of the 5S rRNA/L5/L18/L25 subcomplex. Contacts the 5S rRNA. Binds to the 5S rRNA independently of L5 and L18.

Functionally, this is one of the proteins that binds to the 5S RNA in the ribosome where it forms part of the central protuberance. This chain is Large ribosomal subunit protein bL25, found in Thermobifida fusca (strain YX).